A 2193-amino-acid chain; its full sequence is Genome polyprotein (2193 aa).

Residue glycine 2 is the site of N-myristoyl glycine; by host attachment. The Cytoplasmic portion of the chain corresponds to 2 to 1503; the sequence is GAQVSTQKTG…HVSRAFICLQ (1502 aa). The segment at 567–583 is amphipathic alpha-helix; the sequence is ELQSDVREAVEGAIGRV. Active-site for protease 2A activity residues include histidine 880 and aspartate 898. The Zn(2+) site is built by cysteine 915 and cysteine 917. The active-site For protease 2A activity is the cysteine 969. Residues cysteine 975 and histidine 977 each coordinate Zn(2+). The membrane-binding stretch occupies residues 1109–1181; that stretch reads NNRWLKKFTE…EQSAPSQGDQ (73 aa). An oligomerization region spans residues 1109 to 1247; it reads NNRWLKKFTE…SPGAGKSVAT (139 aa). Positions 1130-1134 are RNA-binding; the sequence is AIKIQ. Residues 1213-1369 enclose the SF3 helicase domain; that stretch reads EKKMSNYIQF…SMYSQNGKIN (157 aa). 3 residues coordinate Zn(2+): cysteine 1377, cysteine 1389, and cysteine 1394. The C4-type; degenerate zinc finger occupies 1377–1394; that stretch reads CDEECCPVNFKKCCPLVC. The tract at residues 1421–1428 is RNA-binding; sequence EYNHRHSV. Residues 1432 to 1437 form an oligomerization region; sequence LEALFQ. An intramembrane segment occupies 1504–1519; sequence ALTTFVSVAGIIYIIY. The Cytoplasmic portion of the chain corresponds to 1520 to 2193; the sequence is KLFAGFQGAY…TLRRKWLDSF (674 aa). Tyrosine 1529 carries the O-(5'-phospho-RNA)-tyrosine modification. The region spanning 1549–1727 is the Peptidase C3 domain; the sequence is GPAFEFAVAM…FSAALLKHYF (179 aa). Active-site for protease 3C activity residues include histidine 1588, glutamate 1619, and cysteine 1695. One can recognise a RdRp catalytic domain in the interval 1958 to 2074; it reads GHLIAFDYSG…SYPWPIDASL (117 aa). Mg(2+) is bound by residues aspartate 1964 and aspartate 2060.

Belongs to the picornaviruses polyprotein family. In terms of assembly, interacts with capsid protein VP1 and capsid protein VP3 to form heterotrimeric protomers. Interacts with capsid protein VP0, and capsid protein VP3 to form heterotrimeric protomers. Five protomers subsequently associate to form pentamers which serve as building blocks for the capsid. Interacts with capsid protein VP2, capsid protein VP3 and capsid protein VP4 following cleavage of capsid protein VP0. As to quaternary structure, interacts with capsid protein VP1 and capsid protein VP3 in the mature capsid. In terms of assembly, interacts with capsid protein VP0 and capsid protein VP1 to form heterotrimeric protomers. Five protomers subsequently associate to form pentamers which serve as building blocks for the capsid. Interacts with capsid protein VP4 in the mature capsid. Interacts with protein 2C; this interaction may be important for virion morphogenesis. Interacts with capsid protein VP1 and capsid protein VP3. As to quaternary structure, homodimer. In terms of assembly, homohexamer; forms a hexameric ring structure with 6-fold symmetry characteristic of AAA+ ATPases. Interacts (via N-terminus) with host RTN3 (via reticulon domain); this interaction is important for viral replication. Interacts with capsid protein VP3; this interaction may be important for virion morphogenesis. Interacts with protein 3CD. As to quaternary structure, homodimer. Interacts with host GBF1. Interacts (via GOLD domain) with host ACBD3 (via GOLD domain); this interaction allows the formation of a viral protein 3A/ACBD3 heterotetramer with a 2:2 stoichiometry, which will stimulate the recruitment of host PI4KB in order to synthesize PI4P at the viral RNA replication sites. In terms of assembly, interacts with RNA-directed RNA polymerase. Interacts with protein 3AB and with RNA-directed RNA polymerase. As to quaternary structure, interacts with Viral protein genome-linked and with protein 3CD. Mg(2+) is required as a cofactor. Post-translationally, specific enzymatic cleavages in vivo by the viral proteases yield processing intermediates and the mature proteins. In terms of processing, myristoylation is required for the formation of pentamers during virus assembly. Further assembly of 12 pentamers and a molecule of genomic RNA generates the provirion. During virion maturation, immature virions are rendered infectious following cleavage of VP0 into VP4 and VP2. This maturation seems to be an autocatalytic event triggered by the presence of RNA in the capsid and it is followed by a conformational change infectious virion. Post-translationally, myristoylation is required during RNA encapsidation and formation of the mature virus particle. In terms of processing, VPg is uridylylated by the polymerase into VPg-pUpU. This acts as a nucleotide-peptide primer for the genomic RNA replication.

It is found in the virion. It localises to the host cytoplasm. The protein localises to the host cytoplasmic vesicle membrane. The protein resides in the host nucleus. It carries out the reaction a ribonucleoside 5'-triphosphate + H2O = a ribonucleoside 5'-diphosphate + phosphate + H(+). It catalyses the reaction Selective cleavage of Tyr-|-Gly bond in the picornavirus polyprotein.. The enzyme catalyses RNA(n) + a ribonucleoside 5'-triphosphate = RNA(n+1) + diphosphate. The catalysed reaction is Selective cleavage of Gln-|-Gly bond in the poliovirus polyprotein. In other picornavirus reactions Glu may be substituted for Gln, and Ser or Thr for Gly.. With respect to regulation, replication or transcription is subject to high level of random mutations by the nucleotide analog ribavirin. Forms an icosahedral capsid of pseudo T=3 symmetry with capsid proteins VP2 and VP3. The capsid is 300 Angstroms in diameter, composed of 60 copies of each capsid protein and enclosing the viral positive strand RNA genome. Capsid protein VP1 mainly forms the vertices of the capsid. Capsid protein VP1 interacts with host cell receptor to provide virion attachment to target host cells. This attachment induces virion internalization. Tyrosine kinases are probably involved in the entry process. After binding to its receptor, the capsid undergoes conformational changes. Capsid protein VP1 N-terminus (that contains an amphipathic alpha-helix) and capsid protein VP4 are externalized. Together, they shape a pore in the host membrane through which viral genome is translocated to host cell cytoplasm. Its function is as follows. Forms an icosahedral capsid of pseudo T=3 symmetry with capsid proteins VP2 and VP3. The capsid is 300 Angstroms in diameter, composed of 60 copies of each capsid protein and enclosing the viral positive strand RNA genome. Functionally, lies on the inner surface of the capsid shell. After binding to the host receptor, the capsid undergoes conformational changes. Capsid protein VP4 is released, Capsid protein VP1 N-terminus is externalized, and together, they shape a pore in the host membrane through which the viral genome is translocated into the host cell cytoplasm. In terms of biological role, component of immature procapsids, which is cleaved into capsid proteins VP4 and VP2 after maturation. Allows the capsid to remain inactive before the maturation step. Cysteine protease that cleaves viral polyprotein and specific host proteins. It is responsible for the autocatalytic cleavage between the P1 and P2 regions, which is the first cleavage occurring in the polyprotein. Also cleaves the host translation initiation factor EIF4G1, in order to shut down the capped cellular mRNA translation. Inhibits the host nucleus-cytoplasm protein and RNA trafficking by cleaving host members of the nuclear pores. Counteracts stress granule formation probably by antagonizing its assembly or promoting its dissassembly. Its function is as follows. Plays an essential role in the virus replication cycle by acting as a viroporin. Creates a pore in the host endoplasmic reticulum and as a consequence releases Ca2+ in the cytoplasm of infected cell. In turn, high levels of cytoplasmic calcium may trigger membrane trafficking and transport of viral ER-associated proteins to viroplasms, sites of viral genome replication. Functionally, induces and associates with structural rearrangements of intracellular membranes. Displays RNA-binding, nucleotide binding and NTPase activities. May play a role in virion morphogenesis and viral RNA encapsidation by interacting with the capsid protein VP3. In terms of biological role, localizes the viral replication complex to the surface of membranous vesicles. Together with protein 3CD binds the Cis-Active RNA Element (CRE) which is involved in RNA synthesis initiation. Acts as a cofactor to stimulate the activity of 3D polymerase, maybe through a nucleid acid chaperone activity. Localizes the viral replication complex to the surface of membranous vesicles. It inhibits host cell endoplasmic reticulum-to-Golgi apparatus transport and causes the disassembly of the Golgi complex, possibly through GBF1 interaction. This would result in depletion of MHC, trail receptors and IFN receptors at the host cell surface. Plays an essential role in viral RNA replication by recruiting ACBD3 and PI4KB at the viral replication sites, thereby allowing the formation of the rearranged membranous structures where viral replication takes place. Its function is as follows. Acts as a primer for viral RNA replication and remains covalently bound to viral genomic RNA. VPg is uridylylated prior to priming replication into VPg-pUpU. The oriI viral genomic sequence may act as a template for this. The VPg-pUpU is then used as primer on the genomic RNA poly(A) by the RNA-dependent RNA polymerase to replicate the viral genome. During genome replication, the VPg-RNA linkage is removed by the host TDP2, thereby accelerating replication. During the late stage of the replication cycle, host TDP2 is excluded from sites of viral RNA synthesis and encapsidation, allowing for the generation of progeny virions. Functionally, involved in the viral replication complex and viral polypeptide maturation. It exhibits protease activity with a specificity and catalytic efficiency that is different from protease 3C. Protein 3CD lacks polymerase activity. Protein 3CD binds to the 5'UTR of the viral genome. In terms of biological role, replicates the viral genomic RNA on the surface of intracellular membranes. May form linear arrays of subunits that propagate along a strong head-to-tail interaction called interface-I. Covalently attaches UMP to a tyrosine of VPg, which is used to prime RNA synthesis. The positive stranded RNA genome is first replicated at virus induced membranous vesicles, creating a dsRNA genomic replication form. This dsRNA is then used as template to synthesize positive stranded RNA genomes. ss(+)RNA genomes are either translated, replicated or encapsidated. Major viral protease that mediates proteolytic processing of the polyprotein. Cleaves host EIF5B, contributing to host translation shutoff. Also cleaves host PABPC1, contributing to host translation shutoff. Cleaves host NLRP1, triggers host N-glycine-mediated degradation of the autoinhibitory NLRP1 N-terminal fragment. The sequence is that of Genome polyprotein from Echovirus 9 (strain Hill).